Here is a 242-residue protein sequence, read N- to C-terminus: Biosynthetic peptidoglycan transglycosylase (242 aa).

Residues 19–39 (LMVVLAVFWGGGIALFSVAPV) traverse the membrane as a helical segment.

Belongs to the glycosyltransferase 51 family.

It localises to the cell inner membrane. The catalysed reaction is [GlcNAc-(1-&gt;4)-Mur2Ac(oyl-L-Ala-gamma-D-Glu-L-Lys-D-Ala-D-Ala)](n)-di-trans,octa-cis-undecaprenyl diphosphate + beta-D-GlcNAc-(1-&gt;4)-Mur2Ac(oyl-L-Ala-gamma-D-Glu-L-Lys-D-Ala-D-Ala)-di-trans,octa-cis-undecaprenyl diphosphate = [GlcNAc-(1-&gt;4)-Mur2Ac(oyl-L-Ala-gamma-D-Glu-L-Lys-D-Ala-D-Ala)](n+1)-di-trans,octa-cis-undecaprenyl diphosphate + di-trans,octa-cis-undecaprenyl diphosphate + H(+). It functions in the pathway cell wall biogenesis; peptidoglycan biosynthesis. Peptidoglycan polymerase that catalyzes glycan chain elongation from lipid-linked precursors. The polypeptide is Biosynthetic peptidoglycan transglycosylase (Escherichia coli O157:H7).